The primary structure comprises 211 residues: Proteasome subunit beta (211 aa).

The propeptide at 1 to 9 is removed in mature form; by autocatalysis; that stretch reads MDNDKYLKG. Threonine 10 serves as the catalytic Nucleophile.

Belongs to the peptidase T1B family. In terms of assembly, the 20S proteasome core is composed of 14 alpha and 14 beta subunits that assemble into four stacked heptameric rings, resulting in a barrel-shaped structure. The two inner rings, each composed of seven catalytic beta subunits, are sandwiched by two outer rings, each composed of seven alpha subunits. The catalytic chamber with the active sites is on the inside of the barrel. Has a gated structure, the ends of the cylinder being occluded by the N-termini of the alpha-subunits. Is capped at one or both ends by the proteasome regulatory ATPase, PAN.

The protein resides in the cytoplasm. The catalysed reaction is Cleavage of peptide bonds with very broad specificity.. Its activity is regulated as follows. The formation of the proteasomal ATPase PAN-20S proteasome complex, via the docking of the C-termini of PAN into the intersubunit pockets in the alpha-rings, triggers opening of the gate for substrate entry. Interconversion between the open-gate and close-gate conformations leads to a dynamic regulation of the 20S proteasome proteolysis activity. Its function is as follows. Component of the proteasome core, a large protease complex with broad specificity involved in protein degradation. The polypeptide is Proteasome subunit beta (Methanosarcina barkeri (strain Fusaro / DSM 804)).